An 816-amino-acid polypeptide reads, in one-letter code: Phosphatidylinositol 4-kinase beta (816 aa).

Disordered regions lie at residues methionine 1–leucine 30, glutamate 101–arginine 120, and arginine 250–serine 318. Residue glycine 2 is modified to N-acetylglycine. An interaction with ACBD3 region spans residues glycine 2–isoleucine 68. The segment covering threonine 10–leucine 30 has biased composition (low complexity). In terms of domain architecture, PIK helical spans cysteine 52–serine 242. Serine 258 bears the Phosphoserine mark. At threonine 263 the chain carries Phosphothreonine. 5 positions are modified to phosphoserine: serine 266, serine 275, serine 277, serine 284, and serine 294. Polar residues-rich tracts occupy residues aspartate 278–lysine 297 and serine 306–serine 318. Serine 428 is subject to Phosphoserine. Threonine 438 carries the phosphothreonine modification. Residue serine 511 is modified to Phosphoserine. A phosphothreonine mark is found at threonine 517 and threonine 519. The PI3K/PI4K catalytic domain occupies glutamate 535–threonine 801. Positions valine 541–glycine 547 are G-loop. The catalytic loop stretch occupies residues glutamine 668–asparagine 676. An activation loop region spans residues histidine 687 to threonine 711.

It belongs to the PI3/PI4-kinase family. Type III PI4K subfamily. Interacts with ARF1 and ARF3 in the Golgi complex, but not with ARF4, ARF5 or ARF6. Interacts with NCS1/FREQ in a calcium-independent manner. Interacts with CALN1/CABP8 and CALN2/CABP7; in a calcium-dependent manner; this interaction competes with NCS1/FREQ binding. Interacts with ACBD3. Interacts with ARMH3, YWHAB, YWHAE, YWHAG, YWHAH, YWHAQ, YWHAZ and SFN. Interacts with GGA2 (via VHS domain); the interaction is important for PI4KB location at the Golgi apparatus membrane. Interacts with ATG9A. Mg(2+) is required as a cofactor. Requires Mn(2+) as cofactor.

It localises to the endomembrane system. The protein resides in the mitochondrion outer membrane. The protein localises to the rough endoplasmic reticulum membrane. It is found in the golgi apparatus. Its subcellular location is the golgi apparatus membrane. It carries out the reaction a 1,2-diacyl-sn-glycero-3-phospho-(1D-myo-inositol) + ATP = a 1,2-diacyl-sn-glycero-3-phospho-(1D-myo-inositol 4-phosphate) + ADP + H(+). Inhibited by wortmannin. Increased kinase activity upon interaction with NCS1/FREQ. Phosphorylates phosphatidylinositol (PI) in the first committed step in the production of the second messenger inositol-1,4,5,-trisphosphate (PIP). May regulate Golgi disintegration/reorganization during mitosis, possibly via its phosphorylation. Involved in Golgi-to-plasma membrane trafficking. May play an important role in the inner ear development. This is Phosphatidylinositol 4-kinase beta (Pi4kb) from Mus musculus (Mouse).